A 267-amino-acid chain; its full sequence is tRNA pseudouridine synthase A (267 aa).

Asp53 serves as the catalytic Nucleophile. Residue Tyr114 participates in substrate binding.

Belongs to the tRNA pseudouridine synthase TruA family. As to quaternary structure, homodimer.

It carries out the reaction uridine(38/39/40) in tRNA = pseudouridine(38/39/40) in tRNA. Its function is as follows. Formation of pseudouridine at positions 38, 39 and 40 in the anticodon stem and loop of transfer RNAs. The protein is tRNA pseudouridine synthase A of Chlamydia trachomatis serovar A (strain ATCC VR-571B / DSM 19440 / HAR-13).